The primary structure comprises 392 residues: Protein FAM185A (392 aa).

Residues Tyr39–Gly60 are disordered.

This chain is Protein FAM185A (FAM185A), found in Homo sapiens (Human).